Reading from the N-terminus, the 361-residue chain is Mitogen-activated protein kinase 14 (361 aa).

The region spanning 25–309 is the Protein kinase domain; the sequence is YQNLTPVGSG…AAEALAHSYF (285 aa). ATP-binding positions include 31 to 39 and Lys-54; that span reads VGSGAYGSV. Asp-151 serves as the catalytic Proton acceptor. A Phosphothreonine modification is found at Thr-181. The TXY signature appears at 181 to 183; that stretch reads TGY. Tyr-183 is subject to Phosphotyrosine.

This sequence belongs to the protein kinase superfamily. CMGC Ser/Thr protein kinase family. MAP kinase subfamily. It depends on Mg(2+) as a cofactor. Post-translationally, dually phosphorylated on Thr-181 and Tyr-183, which activates the enzyme.

The catalysed reaction is L-seryl-[protein] + ATP = O-phospho-L-seryl-[protein] + ADP + H(+). The enzyme catalyses L-threonyl-[protein] + ATP = O-phospho-L-threonyl-[protein] + ADP + H(+). With respect to regulation, activated by tyrosine and threonine phosphorylation. Its function is as follows. Serine/threonine kinase which acts as an essential component of the MAP kinase signal transduction pathway. mapk14a is one of the four p38 MAPKs which play an important role in the cascades of cellular responses evoked by extracellular stimuli such as pro-inflammatory cytokines or physical stress leading to direct activation of transcription factors. Accordingly, p38 MAPKs phosphorylate a broad range of proteins and it has been estimated that they may have approximately 200 to 300 substrates each. Some of the targets are downstream kinases which are activated through phosphorylation and further phosphorylate additional targets. MPK2 is activated by upstream MAPKK/MAPKKK and stimulates MAPKAP kinase 2 to phosphorylate small heat shock proteins. Does not phosphorylate myelin basic protein or MAPKAP kinase 1. The polypeptide is Mitogen-activated protein kinase 14 (mapk14) (Xenopus laevis (African clawed frog)).